A 322-amino-acid chain; its full sequence is DNA repair and recombination protein RadA (322 aa).

105–112 (GMYGSGKT) provides a ligand contact to ATP.

The protein belongs to the eukaryotic RecA-like protein family.

Functionally, involved in DNA repair and in homologous recombination. Binds and assemble on single-stranded DNA to form a nucleoprotein filament. Hydrolyzes ATP in a ssDNA-dependent manner and promotes DNA strand exchange between homologous DNA molecules. This Methanococcus maripaludis (strain C5 / ATCC BAA-1333) protein is DNA repair and recombination protein RadA.